A 402-amino-acid polypeptide reads, in one-letter code: MSKDTLEAIRFDKENVTLDILDQLLLPYESRYINIKSIQDAFEAIKSMQVRGAPAIAIVGAFAITVDTHLYLKSGETSKTVADLLNSIDYLVTSRPTAVNLANACNEIKALLVSHFEKSDLVTEKVWKLLFDYSVSLHEDDLRNNFKIGENGLRFISETLKAQNFKGPFSIVTVCNTGSLATSGHGTALGVIRTVHAQLSKSVSNEEFWFEHVYPLETRPYNQGAKLTTYELHYEKIPFTMICDNMVTSLISTLHKKKNIKGSAAPVKFIITGADRVVKNGDSANKIGTYQLAAIADFFNSTFTKEEDKIKFMVAAPNTTIDLKTETGDEIVIEERPAHELTSLKGPVLREDGSVGEKMTVGIATPGIQVWNPAFDVAPYQLIDCIVTEDEPFKKVDGKFSF.

Residue Asp-275 is the Proton donor of the active site.

Belongs to the eIF-2B alpha/beta/delta subunits family. MtnA subfamily.

It localises to the cytoplasm. The protein resides in the nucleus. The enzyme catalyses 5-(methylsulfanyl)-alpha-D-ribose 1-phosphate = 5-(methylsulfanyl)-D-ribulose 1-phosphate. The protein operates within amino-acid biosynthesis; L-methionine biosynthesis via salvage pathway; L-methionine from S-methyl-5-thio-alpha-D-ribose 1-phosphate: step 1/6. Functionally, catalyzes the interconversion of methylthioribose-1-phosphate (MTR-1-P) into methylthioribulose-1-phosphate (MTRu-1-P). In Clavispora lusitaniae (strain ATCC 42720) (Yeast), this protein is Methylthioribose-1-phosphate isomerase.